Here is a 165-residue protein sequence, read N- to C-terminus: MDPPAIEHPRFAKPQRVAFVQACWHRDVVEEARIAFMKEAEARHLTHVDVFEVPGSFEIPLHAQILAKTRRYTAIVAAGLVVDGGIYRHEFVADTVIKALMDVQLRTEVPVFSAVLTPQQFHETEVHYDFFRRHFAIKGVEVAEACANTLLGLERLRGQVAAGIA.

5-amino-6-(D-ribitylamino)uracil contacts are provided by residues Trp24, 56–58, and 80–82; these read SFE and LVV. Arg88 serves as the catalytic Proton donor. Ser113 is a 5-amino-6-(D-ribitylamino)uracil binding site. His127 provides a ligand contact to (2S)-2-hydroxy-3-oxobutyl phosphate.

This sequence belongs to the DMRL synthase family.

It catalyses the reaction (2S)-2-hydroxy-3-oxobutyl phosphate + 5-amino-6-(D-ribitylamino)uracil = 6,7-dimethyl-8-(1-D-ribityl)lumazine + phosphate + 2 H2O + H(+). Its pathway is cofactor biosynthesis; riboflavin biosynthesis; riboflavin from 2-hydroxy-3-oxobutyl phosphate and 5-amino-6-(D-ribitylamino)uracil: step 1/2. Catalyzes the formation of 6,7-dimethyl-8-ribityllumazine by condensation of 5-amino-6-(D-ribitylamino)uracil with 3,4-dihydroxy-2-butanone 4-phosphate. This is the penultimate step in the biosynthesis of riboflavin. The polypeptide is 6,7-dimethyl-8-ribityllumazine synthase 2 (Bradyrhizobium diazoefficiens (strain JCM 10833 / BCRC 13528 / IAM 13628 / NBRC 14792 / USDA 110)).